A 159-amino-acid polypeptide reads, in one-letter code: Nucleotide-binding protein Avin_13410 (159 aa).

The protein belongs to the YajQ family.

Functionally, nucleotide-binding protein. This Azotobacter vinelandii (strain DJ / ATCC BAA-1303) protein is Nucleotide-binding protein Avin_13410.